A 490-amino-acid polypeptide reads, in one-letter code: Phenylacetaldehyde synthase (490 aa).

Pro-92, His-193, and His-308 together coordinate L-phenylalanine. N6-(pyridoxal phosphate)lysine is present on Lys-309. An L-phenylalanine-binding site is contributed by Phe-338.

The protein belongs to the group II decarboxylase family. As to quaternary structure, homodimer. The cofactor is pyridoxal 5'-phosphate. As to expression, expressed in roots, rosette leaves, stems, cauline leaves and flowers.

It carries out the reaction L-phenylalanine + O2 + H2O + H(+) = 2-phenylacetaldehyde + H2O2 + NH4(+) + CO2. The enzyme catalyses L-dopa + O2 + H2O + H(+) = 3,4-dihydroxyphenylacetaldehyde + H2O2 + NH4(+) + CO2. Bifunctional enzyme that catalyzes the decarboxylation of L-phenylalanine to 2-phenylethylamine, which is then oxidized to form 2-phenylacetaldehyde, a constituent of floral scent. 2-phenylacetaldehyde is a precursor of 2-phenylethanol, another constituent of floral scent. Catalyzes both the decarboxylation and deamination of L-dopa to 3,4-dihydroxylphenylacetaldehyde (DHPAA). This is Phenylacetaldehyde synthase from Arabidopsis thaliana (Mouse-ear cress).